Reading from the N-terminus, the 324-residue chain is Beta-ketoacyl-[acyl-carrier-protein] synthase III (324 aa).

Residues cysteine 116 and histidine 251 contribute to the active site. The tract at residues 252–256 is ACP-binding; that stretch reads QANLR. The active site involves asparagine 281.

This sequence belongs to the thiolase-like superfamily. FabH family. In terms of assembly, homodimer.

Its subcellular location is the cytoplasm. The enzyme catalyses malonyl-[ACP] + acetyl-CoA + H(+) = 3-oxobutanoyl-[ACP] + CO2 + CoA. The protein operates within lipid metabolism; fatty acid biosynthesis. Catalyzes the condensation reaction of fatty acid synthesis by the addition to an acyl acceptor of two carbons from malonyl-ACP. Catalyzes the first condensation reaction which initiates fatty acid synthesis and may therefore play a role in governing the total rate of fatty acid production. Possesses both acetoacetyl-ACP synthase and acetyl transacylase activities. Its substrate specificity determines the biosynthesis of branched-chain and/or straight-chain of fatty acids. This is Beta-ketoacyl-[acyl-carrier-protein] synthase III from Xylella fastidiosa (strain Temecula1 / ATCC 700964).